The chain runs to 394 residues: C-19 steroid 1alpha-hydroxylase (394 aa).

H81, R85, R281, G335, H338, and C340 together coordinate heme b.

This sequence belongs to the cytochrome P450 family. The cofactor is heme b.

It carries out the reaction testosterone + 2 reduced [2Fe-2S]-[ferredoxin] + O2 + 2 H(+) = 1alpha-hydroxytestosterone + 2 oxidized [2Fe-2S]-[ferredoxin] + H2O. It catalyses the reaction androst-4-ene-3,17-dione + 2 reduced [2Fe-2S]-[ferredoxin] + O2 + 2 H(+) = 1alpha-hydroxyandrost-4-ene-3,17-dione + 2 oxidized [2Fe-2S]-[ferredoxin] + H2O. Its function is as follows. Hydroxylase that can catalyze the in vitro conversion of the sesquiterpenoid nootkatone, a natural organic compound produced by some plants, to at least five hydrophilic products. The native ferredoxin reductase FdR_B and either Fdx2 or Fdx8 ferredoxins can act as the redox partners for the conversion of nootkatone. Functionally, in addition, acts as a steroid 1alpha-hydroxylase, when associated in vitro with the surrogate redox partners bovine adrenodoxin (Adx) and adrenodoxin reductase (Adr). Acts on several C-19 steroid substrates, including testosterone and androstenedione, which are hydroxylated to 1alpha-hydroxytestosterone and 1alpha-hydroxyandrostenedione, respectively. Can use their derivatives testosterone-acetate and 11-oxoandrostenedione, but not vitamin D3 and 25-hydroxyvitamin D3. Also catalyzes the hydroxylation of the C-21 steroid 11-deoxycorticosterone to 1alpha-hydroxy-11-deoxycorticosterone. Catalyzes the hydroxylation of the C-21 steroid progesterone, leading to the formation of seven products: two major (1alpha-hydroxyprogesterone and 17alpha-hydroxyprogesterone) and five minor products. The chain is C-19 steroid 1alpha-hydroxylase from Sorangium cellulosum (strain So ce56) (Polyangium cellulosum (strain So ce56)).